Reading from the N-terminus, the 116-residue chain is uncharacterized protein (116 aa).

Residues 77 to 116 (SATSHYPKADDPQRFARSVSRGPSRVRRPARNSASRPVRR) form a disordered region.

This is an uncharacterized protein from Frog virus 3 (isolate Goorha) (FV-3).